The primary structure comprises 501 residues: Growth/differentiation factor 5 (501 aa).

The first 27 residues, 1-27 (MRLPKLLTFLLWYLAWLDLEFICTVLG), serve as a signal peptide directing secretion. A propeptide spanning residues 28–381 (APDLGQRPQG…YLFSQRRKRR (354 aa)) is cleaved from the precursor. The segment at 29–169 (PDLGQRPQGT…EPFRPPPITP (141 aa)) is disordered. Residues 99–111 (PRPGGPEPKPGHP) show a composition bias toward pro residues. Basic and acidic residues predominate over residues 148 to 162 (KAREPGPPREPKEPF). Asn189 carries N-linked (GlcNAc...) asparagine glycosylation. The segment at 246-265 (PSDTAKPAAPGGGRAAQLKL) is disordered. Cystine bridges form between Cys400–Cys466, Cys429–Cys498, and Cys433–Cys500.

This sequence belongs to the TGF-beta family. In terms of assembly, homodimer; disulfide-linked. Interacts with serine proteases, HTRA1 and HTRA3. Following LPS binding, may form a complex with CXCR4, HSP90AA1 and HSPA8. Interacts with high affinity with NOG; inhibits chondrogenesis. Interacts with high affinity with BMPR1B and lower affinity with BMPR1A; positively regulates chondrocyte differentiation and induces SMAD dependent signaling. Interacts with FBN1 (via N-terminal domain) and FBN2. Interacts with TGFBR3. As to expression, predominantly expressed in long bones during embryonic development. Expressed in monocytes (at protein level).

The protein localises to the secreted. It is found in the cell membrane. In terms of biological role, growth factor involved in bone and cartilage formation. During cartilage development regulates differentiation of chondrogenic tissue through two pathways. Firstly, positively regulates differentiation of chondrogenic tissue through its binding of high affinity with BMPR1B and of less affinity with BMPR1A, leading to induction of SMAD1-SMAD5-SMAD8 complex phosphorylation and then SMAD protein signaling transduction. Secondly, negatively regulates chondrogenic differentiation through its interaction with NOG. Required to prevent excessive muscle loss upon denervation. This function requires SMAD4 and is mediated by phosphorylated SMAD1/5/8. Binds bacterial lipopolysaccharide (LPS) and mediates LPS-induced inflammatory response, including TNF secretion by monocytes. The protein is Growth/differentiation factor 5 (GDF5) of Homo sapiens (Human).